The primary structure comprises 576 residues: Proline--tRNA ligase (576 aa).

It belongs to the class-II aminoacyl-tRNA synthetase family. ProS type 1 subfamily. Homodimer.

It is found in the cytoplasm. It catalyses the reaction tRNA(Pro) + L-proline + ATP = L-prolyl-tRNA(Pro) + AMP + diphosphate. Functionally, catalyzes the attachment of proline to tRNA(Pro) in a two-step reaction: proline is first activated by ATP to form Pro-AMP and then transferred to the acceptor end of tRNA(Pro). As ProRS can inadvertently accommodate and process non-cognate amino acids such as alanine and cysteine, to avoid such errors it has two additional distinct editing activities against alanine. One activity is designated as 'pretransfer' editing and involves the tRNA(Pro)-independent hydrolysis of activated Ala-AMP. The other activity is designated 'posttransfer' editing and involves deacylation of mischarged Ala-tRNA(Pro). The misacylated Cys-tRNA(Pro) is not edited by ProRS. The sequence is that of Proline--tRNA ligase from Dechloromonas aromatica (strain RCB).